The primary structure comprises 122 residues: Large-conductance mechanosensitive channel (122 aa).

2 helical membrane-spanning segments follow: residues 14 to 34 and 67 to 87; these read VLDL…VKSL and GAFL…FILI.

It belongs to the MscL family. Homopentamer.

Its subcellular location is the cell membrane. Its function is as follows. Channel that opens in response to stretch forces in the membrane lipid bilayer. May participate in the regulation of osmotic pressure changes within the cell. This chain is Large-conductance mechanosensitive channel, found in Lactococcus lactis subsp. lactis (strain IL1403) (Streptococcus lactis).